The chain runs to 130 residues: Glycine cleavage system H protein (130 aa).

Residues 25-107 (IATIGITEFA…YGEGWFLKVR (83 aa)) form the Lipoyl-binding domain. Lysine 66 is modified (N6-lipoyllysine).

Belongs to the GcvH family. The glycine cleavage system is composed of four proteins: P, T, L and H. The cofactor is (R)-lipoate.

Its function is as follows. The glycine cleavage system catalyzes the degradation of glycine. The H protein shuttles the methylamine group of glycine from the P protein to the T protein. This is Glycine cleavage system H protein from Trichormus variabilis (strain ATCC 29413 / PCC 7937) (Anabaena variabilis).